Consider the following 120-residue polypeptide: Large ribosomal subunit protein uL18 (120 aa).

Belongs to the universal ribosomal protein uL18 family. As to quaternary structure, part of the 50S ribosomal subunit; part of the 5S rRNA/L5/L18/L25 subcomplex. Contacts the 5S and 23S rRNAs.

This is one of the proteins that bind and probably mediate the attachment of the 5S RNA into the large ribosomal subunit, where it forms part of the central protuberance. In Treponema denticola (strain ATCC 35405 / DSM 14222 / CIP 103919 / JCM 8153 / KCTC 15104), this protein is Large ribosomal subunit protein uL18.